A 312-amino-acid chain; its full sequence is Thioredoxin reductase (312 aa).

Residue 33–43 (EGFFSGIAGGQ) coordinates FAD. A disulfide bridge connects residues cysteine 138 and cysteine 141. 283 to 292 (DVQDKYYRQA) serves as a coordination point for FAD.

This sequence belongs to the class-II pyridine nucleotide-disulfide oxidoreductase family. In terms of assembly, homodimer. FAD is required as a cofactor.

The protein localises to the cytoplasm. It carries out the reaction [thioredoxin]-dithiol + NADP(+) = [thioredoxin]-disulfide + NADPH + H(+). The polypeptide is Thioredoxin reductase (trxB) (Chlamydia trachomatis serovar D (strain ATCC VR-885 / DSM 19411 / UW-3/Cx)).